We begin with the raw amino-acid sequence, 566 residues long: OTU domain-containing protein 5 (566 aa).

2 disordered regions span residues Met-1–Leu-117 and Gly-145–Tyr-175. The span at Pro-11–Pro-30 shows a compositional bias: pro residues. The span at Ala-34 to Gly-47 shows a compositional bias: gly residues. Positions Ala-63–Pro-75 are enriched in pro residues. Ser-64 carries the phosphoserine modification. Low complexity predominate over residues Ala-84–Gln-97. The span at Gly-105–Asp-115 shows a compositional bias: gly residues. A Phosphoserine modification is found at Ser-165. Phosphotyrosine is present on Tyr-175. Ser-177 is modified (phosphoserine). Thr-195 is modified (phosphothreonine). In terms of domain architecture, OTU spans Phe-213–Pro-336. Positions Met-218–Cys-224 are cys-loop. Asp-221 is a catalytic residue. The active-site Nucleophile is the Cys-224. The tract at residues Lys-273–Ile-283 is variable-loop. Ser-323 carries the post-translational modification Phosphoserine. The interval Tyr-324 to His-329 is his-loop. His-329 is an active-site residue. Residues Ser-332 and Ser-370 each carry the phosphoserine modification. The segment at Ala-413–Asp-499 is disordered. 2 stretches are compositionally biased toward low complexity: residues Ala-425–Ser-438 and Ser-445–Pro-457. Phosphoserine is present on Ser-447. Thr-502 is subject to Phosphothreonine. Phosphoserine is present on Ser-503.

This sequence belongs to the peptidase C85 family. As to quaternary structure, interacts with TRAF3. Post-translationally, phosphorylation at Ser-177 is required for deubiquitinating activity. Phosphorylation at Ser-323, Ser-332 and Ser-503 by MTOR promotes its activity.

Its subcellular location is the nucleus. It catalyses the reaction Thiol-dependent hydrolysis of ester, thioester, amide, peptide and isopeptide bonds formed by the C-terminal Gly of ubiquitin (a 76-residue protein attached to proteins as an intracellular targeting signal).. With respect to regulation, inhibited by N-ethyl-maleimide (NEM). In terms of biological role, deubiquitinating enzyme that functions as a negative regulator of the innate immune system. Has peptidase activity towards 'Lys-48'- and 'Lys-63'-linked polyubiquitin chains. Can also cleave 'Lys-11'-linked ubiquitin chains (in vitro). Acts via TRAF3 deubiquitination and subsequent suppression of type I interferon (IFN) production. Controls neuroectodermal differentiation through cleaving 'Lys-48'-linked ubiquitin chains to counteract degradation of select chromatin regulators such as ARID1A, HDAC2 and HCF1. Acts as a positive regulator of mTORC1 and mTORC2 signaling following phosphorylation by MTOR: acts by mediating deubiquitination of BTRC, leading to its stability. The sequence is that of OTU domain-containing protein 5 from Mus musculus (Mouse).